The primary structure comprises 479 residues: MASHAVTSGQKPHVVCIPFPAQGHINPMLKVAKLLYARGFHVTFVNTNYNHNRLIRSRGPNSLDGLPSFRFESIPDGLPEENKDVMQDVPTLCESTMKNCLAPFKELLRRINTTKDVPPVSCIVSDGVMSFTLDAAEELGVPDVLFWTPSACGFLAYLHFYRFIEKGLSPIKDESSLDTKINWIPSMKNLGLKDIPSFIRATNTEDIMLNFFVHEADRAKRASAIILNTFDSLEHDVVRSIQSIIPQVYTIGPLHLFVNRDIDEESDIGQIGTNMWREEMECLDWLDTKSPNSVVYVNFGSITVMSAKQLVEFAWGLAATKKDFLWVIRPDLVAGDVPMLPPDFLIETANRRMLASWCPQEKVLSHPAVGGFLTHSGWNSTLESLSGGVPMVCWPFFAEQQTNCKYCCDEWEVGMEIGGDVRREEVEELVRELMDGDKGKKMRQKAEEWQRLAEEATKPIYGSSELNFQMVVDKVLLGE.

UDP-alpha-D-glucose contacts are provided by residues Ser301, 358 to 360 (CPQ), 375 to 383 (HSGWNSTLE), and 397 to 400 (FAEQ).

It belongs to the UDP-glycosyltransferase family. Expressed in roots, shoots and leaves.

The sequence is that of UDP-glycosyltransferase 85A5 (UGT85A5) from Arabidopsis thaliana (Mouse-ear cress).